Reading from the N-terminus, the 236-residue chain is 2,3,4,5-tetrahydropyridine-2,6-dicarboxylate N-acetyltransferase (236 aa).

This sequence belongs to the transferase hexapeptide repeat family. DapH subfamily.

It catalyses the reaction (S)-2,3,4,5-tetrahydrodipicolinate + acetyl-CoA + H2O = L-2-acetamido-6-oxoheptanedioate + CoA. Its pathway is amino-acid biosynthesis; L-lysine biosynthesis via DAP pathway; LL-2,6-diaminopimelate from (S)-tetrahydrodipicolinate (acetylase route): step 1/3. In terms of biological role, catalyzes the transfer of an acetyl group from acetyl-CoA to tetrahydrodipicolinate. The polypeptide is 2,3,4,5-tetrahydropyridine-2,6-dicarboxylate N-acetyltransferase (Clostridium botulinum (strain Okra / Type B1)).